The sequence spans 86 residues: MAIFCNNVLAALPTQCNPGFLDDLPPRIRKVCVALSRIYELGSEMESYIGDKENHITGFHESIPLLDSGVKRQDVDHVFLRFGRRR.

Positions 1 to 18 are cleaved as a signal peptide; it reads MAIFCNNVLAALPTQCNP. The propeptide occupies 19–70; that stretch reads GFLDDLPPRIRKVCVALSRIYELGSEMESYIGDKENHITGFHESIPLLDSGV. At Q73 the chain carries Pyrrolidone carboxylic acid. A Phenylalanine amide modification is found at F82.

The protein localises to the secreted. Myoinhibiting neuropeptide. The polypeptide is Myosuppressin (Apis mellifera (Honeybee)).